A 2260-amino-acid chain; its full sequence is Protein Ycf2 (2260 aa).

Residue Gly1614–Ser1621 coordinates ATP.

Belongs to the Ycf2 family.

It is found in the plastid. The protein localises to the chloroplast stroma. Probable ATPase of unknown function. Its presence in a non-photosynthetic plant (Epifagus virginiana) and experiments in tobacco indicate that it has an essential function which is probably not related to photosynthesis. This is Protein Ycf2 from Dioscorea elephantipes (Elephant's foot yam).